A 400-amino-acid polypeptide reads, in one-letter code: Argininosuccinate synthase (400 aa).

ATP contacts are provided by residues 6-14 and A33; that span reads AYSGGLDTS. Positions 84 and 89 each coordinate L-citrulline. Position 114 (G114) interacts with ATP. Residues T116, N120, and D121 each contribute to the L-aspartate site. N120 serves as a coordination point for L-citrulline. Residues R124, S173, S182, E258, and Y270 each coordinate L-citrulline.

It belongs to the argininosuccinate synthase family. Type 1 subfamily. As to quaternary structure, homotetramer.

The protein localises to the cytoplasm. The enzyme catalyses L-citrulline + L-aspartate + ATP = 2-(N(omega)-L-arginino)succinate + AMP + diphosphate + H(+). It functions in the pathway amino-acid biosynthesis; L-arginine biosynthesis; L-arginine from L-ornithine and carbamoyl phosphate: step 2/3. This is Argininosuccinate synthase from Thermus thermophilus (strain ATCC BAA-163 / DSM 7039 / HB27).